We begin with the raw amino-acid sequence, 168 residues long: Plastocyanin, chloroplastic (168 aa).

Residues 1 to 70 (MASVAAAAVS…SSLLLVASAN (70 aa)) constitute a chloroplast transit peptide. Residues 71–168 (AATVKMGGDD…AGMKGVVTVS (98 aa)) enclose the Plastocyanin-like domain. Positions 108, 153, 156, and 161 each coordinate Cu cation.

This sequence belongs to the plastocyanin family. Cu(2+) serves as cofactor.

It is found in the plastid. The protein localises to the chloroplast thylakoid membrane. Participates in electron transfer between P700 and the cytochrome b6-f complex in photosystem I. This Physcomitrium patens (Spreading-leaved earth moss) protein is Plastocyanin, chloroplastic (PETE).